Consider the following 209-residue polypeptide: Pyridoxine/pyridoxamine 5'-phosphate oxidase (209 aa).

Substrate contacts are provided by residues 5 to 8 and Lys-63; that span reads REEY. Residues 58 to 63, 73 to 74, Arg-79, Lys-80, and Gln-102 each bind FMN; these read RVVLLK and FT. Tyr-120, Arg-124, and Ser-128 together coordinate substrate. Residues 137–138 and Trp-181 each bind FMN; that span reads QS. 187-189 lines the substrate pocket; the sequence is RLH. An FMN-binding site is contributed by Arg-191.

Belongs to the pyridoxamine 5'-phosphate oxidase family. Homodimer. FMN serves as cofactor.

The catalysed reaction is pyridoxamine 5'-phosphate + O2 + H2O = pyridoxal 5'-phosphate + H2O2 + NH4(+). It catalyses the reaction pyridoxine 5'-phosphate + O2 = pyridoxal 5'-phosphate + H2O2. The protein operates within cofactor metabolism; pyridoxal 5'-phosphate salvage; pyridoxal 5'-phosphate from pyridoxamine 5'-phosphate: step 1/1. Its pathway is cofactor metabolism; pyridoxal 5'-phosphate salvage; pyridoxal 5'-phosphate from pyridoxine 5'-phosphate: step 1/1. In terms of biological role, catalyzes the oxidation of either pyridoxine 5'-phosphate (PNP) or pyridoxamine 5'-phosphate (PMP) into pyridoxal 5'-phosphate (PLP). The chain is Pyridoxine/pyridoxamine 5'-phosphate oxidase from Alcanivorax borkumensis (strain ATCC 700651 / DSM 11573 / NCIMB 13689 / SK2).